Consider the following 362-residue polypeptide: UDP-N-acetylglucosamine--N-acetylmuramyl-(pentapeptide) pyrophosphoryl-undecaprenol N-acetylglucosamine transferase (362 aa).

UDP-N-acetyl-alpha-D-glucosamine contacts are provided by residues 14 to 16 (TGG), Asn122, Arg163, Ser190, and Gln285.

It belongs to the glycosyltransferase 28 family. MurG subfamily.

The protein localises to the cell inner membrane. The catalysed reaction is di-trans,octa-cis-undecaprenyl diphospho-N-acetyl-alpha-D-muramoyl-L-alanyl-D-glutamyl-meso-2,6-diaminopimeloyl-D-alanyl-D-alanine + UDP-N-acetyl-alpha-D-glucosamine = di-trans,octa-cis-undecaprenyl diphospho-[N-acetyl-alpha-D-glucosaminyl-(1-&gt;4)]-N-acetyl-alpha-D-muramoyl-L-alanyl-D-glutamyl-meso-2,6-diaminopimeloyl-D-alanyl-D-alanine + UDP + H(+). The protein operates within cell wall biogenesis; peptidoglycan biosynthesis. Cell wall formation. Catalyzes the transfer of a GlcNAc subunit on undecaprenyl-pyrophosphoryl-MurNAc-pentapeptide (lipid intermediate I) to form undecaprenyl-pyrophosphoryl-MurNAc-(pentapeptide)GlcNAc (lipid intermediate II). The protein is UDP-N-acetylglucosamine--N-acetylmuramyl-(pentapeptide) pyrophosphoryl-undecaprenol N-acetylglucosamine transferase of Prochlorococcus marinus (strain MIT 9215).